We begin with the raw amino-acid sequence, 396 residues long: MNQSENQIDQILKRGVAEVIVEEDFKKLLLSGRKLRLKEGFDPSSPDIHLGHMVALRKLRQLQDLGHQVVLIVGDWTAQIGDPSGASVTRPMLSAEQVKANAKTYLEQFFKIVDKDKTEVRWQSEWYGNFKLEDVVRLSSKFTVAQMLARDDFAKRYAAGKPISVTELLYPMLQAYDSVMVKSDVEFGGTDQKFNLLVGRELQEMVGQKPQQVLMVPILVGTDGVHKMSKSLGNYIGVAEDPSEIFGKCMSIPDELILQYFELVTDIPDQEIADFKAQMENGQVNPMILKKRLASELLTQLYNATAAQEADARFTRVVQRGEIPEDMPECRLENGQNTGVIDFIILSGLAKSKSEARRLLEQGAVEINSEKISDQNTPVKCGDIIKAGKRRYSKAI.

The short motif at 43 to 52 is the 'HIGH' region element; sequence PSSPDIHLGH. The 'KMSKS' region motif lies at 227-231; it reads KMSKS. Lys-230 contacts ATP. Residues 338 to 396 enclose the S4 RNA-binding domain; it reads TGVIDFIILSGLAKSKSEARRLLEQGAVEINSEKISDQNTPVKCGDIIKAGKRRYSKAI.

The protein belongs to the class-I aminoacyl-tRNA synthetase family. TyrS type 2 subfamily. As to quaternary structure, homodimer.

It localises to the cytoplasm. It carries out the reaction tRNA(Tyr) + L-tyrosine + ATP = L-tyrosyl-tRNA(Tyr) + AMP + diphosphate + H(+). Functionally, catalyzes the attachment of tyrosine to tRNA(Tyr) in a two-step reaction: tyrosine is first activated by ATP to form Tyr-AMP and then transferred to the acceptor end of tRNA(Tyr). The protein is Tyrosine--tRNA ligase of Dehalococcoides mccartyi (strain CBDB1).